We begin with the raw amino-acid sequence, 168 residues long: Cell division inhibitor SulA (168 aa).

The ftsZ binding stretch occupies residues 105-111 (ALETGNY). Residues 161-168 (RIHSRMVH) are lon protease binding.

Belongs to the SulA family. In terms of assembly, interacts with FtsZ. Is rapidly cleaved and degraded by the Lon protease once DNA damage is repaired.

Functionally, component of the SOS system and an inhibitor of cell division. Accumulation of SulA causes rapid cessation of cell division and the appearance of long, non-septate filaments. In the presence of GTP, binds a polymerization-competent form of FtsZ in a 1:1 ratio, thus inhibiting FtsZ polymerization and therefore preventing it from participating in the assembly of the Z ring. This mechanism prevents the premature segregation of damaged DNA to daughter cells during cell division. The chain is Cell division inhibitor SulA from Cronobacter turicensis (strain DSM 18703 / CCUG 55852 / LMG 23827 / z3032).